Reading from the N-terminus, the 238-residue chain is Ribonuclease PH (238 aa).

Residues Arg86 and 124–126 (GTR) contribute to the phosphate site.

This sequence belongs to the RNase PH family. Homohexameric ring arranged as a trimer of dimers.

It carries out the reaction tRNA(n+1) + phosphate = tRNA(n) + a ribonucleoside 5'-diphosphate. Phosphorolytic 3'-5' exoribonuclease that plays an important role in tRNA 3'-end maturation. Removes nucleotide residues following the 3'-CCA terminus of tRNAs; can also add nucleotides to the ends of RNA molecules by using nucleoside diphosphates as substrates, but this may not be physiologically important. Probably plays a role in initiation of 16S rRNA degradation (leading to ribosome degradation) during starvation. This is Ribonuclease PH from Psychrobacter arcticus (strain DSM 17307 / VKM B-2377 / 273-4).